Reading from the N-terminus, the 101-residue chain is Phosphoribosyl-AMP cyclohydrolase (101 aa).

Mg(2+) is bound at residue D71. Residue C72 coordinates Zn(2+). D73 and D75 together coordinate Mg(2+). Zn(2+) is bound by residues C88 and C95.

This sequence belongs to the PRA-CH family. In terms of assembly, homodimer. Mg(2+) is required as a cofactor. The cofactor is Zn(2+).

The protein resides in the cytoplasm. It catalyses the reaction 1-(5-phospho-beta-D-ribosyl)-5'-AMP + H2O = 1-(5-phospho-beta-D-ribosyl)-5-[(5-phospho-beta-D-ribosylamino)methylideneamino]imidazole-4-carboxamide. It functions in the pathway amino-acid biosynthesis; L-histidine biosynthesis; L-histidine from 5-phospho-alpha-D-ribose 1-diphosphate: step 3/9. In terms of biological role, catalyzes the hydrolysis of the adenine ring of phosphoribosyl-AMP. The protein is Phosphoribosyl-AMP cyclohydrolase of Bacillus cereus (strain B4264).